The chain runs to 622 residues: Arginine--tRNA ligase (622 aa).

Residues 127 to 137 carry the 'HIGH' region motif; it reads ANPVHPLHVGH.

The protein belongs to the class-I aminoacyl-tRNA synthetase family.

It localises to the cytoplasm. It carries out the reaction tRNA(Arg) + L-arginine + ATP = L-arginyl-tRNA(Arg) + AMP + diphosphate. The sequence is that of Arginine--tRNA ligase from Ignicoccus hospitalis (strain KIN4/I / DSM 18386 / JCM 14125).